The following is a 187-amino-acid chain: UPF0232 protein MMAR_0004 (187 aa).

2 disordered regions span residues 1-77 (MSDD…QPLG) and 166-187 (ASPSWRKGPRHIAGRGPRDTYG). Basic and acidic residues predominate over residues 14-30 (AARDELSGMDLVRRTLA). The span at 31 to 55 (EARAAARARGQDPGRGFAAGPAPRR) shows a compositional bias: low complexity.

Belongs to the UPF0232 family.

This is UPF0232 protein MMAR_0004 from Mycobacterium marinum (strain ATCC BAA-535 / M).